Here is a 367-residue protein sequence, read N- to C-terminus: tRNA/tmRNA (uracil-C(5))-methyltransferase (367 aa).

5 residues coordinate S-adenosyl-L-methionine: glutamine 190, tyrosine 218, asparagine 223, glutamate 239, and aspartate 299. The Nucleophile role is filled by cysteine 324. The active-site Proton acceptor is glutamate 358.

The protein belongs to the class I-like SAM-binding methyltransferase superfamily. RNA M5U methyltransferase family. TrmA subfamily.

The enzyme catalyses uridine(54) in tRNA + S-adenosyl-L-methionine = 5-methyluridine(54) in tRNA + S-adenosyl-L-homocysteine + H(+). It carries out the reaction uridine(341) in tmRNA + S-adenosyl-L-methionine = 5-methyluridine(341) in tmRNA + S-adenosyl-L-homocysteine + H(+). Its function is as follows. Dual-specificity methyltransferase that catalyzes the formation of 5-methyluridine at position 54 (m5U54) in all tRNAs, and that of position 341 (m5U341) in tmRNA (transfer-mRNA). The sequence is that of tRNA/tmRNA (uracil-C(5))-methyltransferase from Serratia proteamaculans (strain 568).